Consider the following 384-residue polypeptide: Formate-dependent phosphoribosylglycinamide formyltransferase (384 aa).

Residues 14–15 (EL) and glutamate 74 contribute to the N(1)-(5-phospho-beta-D-ribosyl)glycinamide site. ATP contacts are provided by residues arginine 106, lysine 147, 152 to 157 (SSGKGQ), 187 to 190 (EEFI), and glutamate 195. The ATP-grasp domain occupies 111–300 (RLAAETLHLP…EFALHVRAVL (190 aa)). Mg(2+)-binding residues include glutamate 259 and glutamate 271. Residues aspartate 278, lysine 348, and 355–356 (RR) contribute to the N(1)-(5-phospho-beta-D-ribosyl)glycinamide site.

The protein belongs to the PurK/PurT family. In terms of assembly, homodimer.

The catalysed reaction is N(1)-(5-phospho-beta-D-ribosyl)glycinamide + formate + ATP = N(2)-formyl-N(1)-(5-phospho-beta-D-ribosyl)glycinamide + ADP + phosphate + H(+). It participates in purine metabolism; IMP biosynthesis via de novo pathway; N(2)-formyl-N(1)-(5-phospho-D-ribosyl)glycinamide from N(1)-(5-phospho-D-ribosyl)glycinamide (formate route): step 1/1. In terms of biological role, involved in the de novo purine biosynthesis. Catalyzes the transfer of formate to 5-phospho-ribosyl-glycinamide (GAR), producing 5-phospho-ribosyl-N-formylglycinamide (FGAR). Formate is provided by PurU via hydrolysis of 10-formyl-tetrahydrofolate. In Bacillus velezensis (strain DSM 23117 / BGSC 10A6 / LMG 26770 / FZB42) (Bacillus amyloliquefaciens subsp. plantarum), this protein is Formate-dependent phosphoribosylglycinamide formyltransferase.